A 286-amino-acid polypeptide reads, in one-letter code: uncharacterized protein (286 aa).

This sequence belongs to the chlamydial CPn_0389/CT_041/TC_0311 family.

This is an uncharacterized protein from Chlamydia muridarum (strain MoPn / Nigg).